A 690-amino-acid chain; its full sequence is BURP domain-containing protein 14 (690 aa).

Positions 1-26 (MAPPRHARLVAATIAVLLCHLPRSAA) are cleaved as a signal peptide. A disordered region spans residues 134–163 (GSSWSKSSSDGDGAAAAAAPAGGGGGGGGG). The span at 135–153 (SSWSKSSSDGDGAAAAAAP) shows a compositional bias: low complexity. Positions 154–163 (AGGGGGGGGG) are enriched in gly residues. The N-linked (GlcNAc...) asparagine glycan is linked to Asn178. The span at 201 to 211 (SNGGGGGGGGV) shows a compositional bias: gly residues. The tract at residues 201-232 (SNGGGGGGGGVDSFRRYGKGSQGRNDSFTSYE) is disordered. Residues Asn225, Asn317, Asn379, Asn432, Asn450, and Asn601 are each glycosylated (N-linked (GlcNAc...) asparagine). Positions 477–689 (FFRERDLVAG…FQGDMTWTVA (213 aa)) constitute a BURP domain.

Expressed in panicles.

The polypeptide is BURP domain-containing protein 14 (BURP14) (Oryza sativa subsp. japonica (Rice)).